The sequence spans 121 residues: Protein MGF 110-14L (121 aa).

A signal peptide spans 1 to 17 (MKVLLGLLLGYSVLILA).

This sequence belongs to the asfivirus MGF 110 family.

In African swine fever virus (isolate Portugal/Lis 57/1957) (ASFV), this protein is Protein MGF 110-14L.